A 201-amino-acid chain; its full sequence is Potassium-transporting ATPase KdpC subunit (201 aa).

Residues 13–33 (IIFMIFTILCGGIYTIFITGI) traverse the membrane as a helical segment.

Belongs to the KdpC family. In terms of assembly, the system is composed of three essential subunits: KdpA, KdpB and KdpC.

It is found in the cell membrane. In terms of biological role, part of the high-affinity ATP-driven potassium transport (or Kdp) system, which catalyzes the hydrolysis of ATP coupled with the electrogenic transport of potassium into the cytoplasm. This subunit acts as a catalytic chaperone that increases the ATP-binding affinity of the ATP-hydrolyzing subunit KdpB by the formation of a transient KdpB/KdpC/ATP ternary complex. The polypeptide is Potassium-transporting ATPase KdpC subunit (Clostridium botulinum (strain Eklund 17B / Type B)).